The primary structure comprises 381 residues: MGKEEISTTKYLIHAQINANGIVEKPDVVGAIFGQTEGLLSNDLDLREFQKTGRIGRIKVNITSRGGKSKGEIIIPSSLDRVETAILAASLETINRVGPCEAYIQVTKVEDVRAVKRKRVVERAKEIYASMMEEVTPESLKMIEEVKEAMRVHEITEYGEEKLPAGPNVETSDAILVVEGRSDVLNLLKYGIKNAIAVEGVSVPKTVADLTRKKTVTAFVDGDRGGELILKELLQVGEIDYVTRAPKGKEVEDLEKDEIMMALRNKVPVEQFYHDLGMKKEKKKTEDKMVLLRNILKELEGTGNAEILDDALNILREVKVENLYDELSRVNNHPYAVVFDGVITQRLVDLSFEKGLRYLVAVRSGDIVKKPHNLKLITGHT.

A Toprim domain is found at 173–259 (DAILVVEGRS…EVEDLEKDEI (87 aa)). 3 residues coordinate Mg(2+): E179, D221, and D223.

This sequence belongs to the archaeal DnaG primase family. Forms a ternary complex with MCM helicase and DNA. Component of the archaeal exosome complex. The cofactor is Mg(2+).

The catalysed reaction is ssDNA + n NTP = ssDNA/pppN(pN)n-1 hybrid + (n-1) diphosphate.. In terms of biological role, RNA polymerase that catalyzes the synthesis of short RNA molecules used as primers for DNA polymerase during DNA replication. Also part of the exosome, which is a complex involved in RNA degradation. Acts as a poly(A)-binding protein that enhances the interaction between heteromeric, adenine-rich transcripts and the exosome. This chain is DNA primase DnaG, found in Methanothermobacter thermautotrophicus (strain ATCC 29096 / DSM 1053 / JCM 10044 / NBRC 100330 / Delta H) (Methanobacterium thermoautotrophicum).